The sequence spans 154 residues: uncharacterized protein (154 aa).

4 helical membrane passes run 39-61, 65-87, 94-113, and 128-150; these read LLIF…FFAR, LPYI…VSLL, VESL…RVFI, and LLIN…SPFT.

The protein localises to the cell membrane. This is an uncharacterized protein from Aquifex aeolicus (strain VF5).